Consider the following 469-residue polypeptide: Repressible acid phosphatase (469 aa).

Residues methionine 1–alanine 16 form the signal peptide. N-linked (GlcNAc...) asparagine glycans are attached at residues asparagine 23 and asparagine 31. The active-site Nucleophile is histidine 77. N-linked (GlcNAc...) asparagine glycosylation is found at asparagine 129, asparagine 201, asparagine 229, asparagine 250, and asparagine 317. The Proton donor role is filled by aspartate 340. Residues asparagine 392 and asparagine 447 are each glycosylated (N-linked (GlcNAc...) asparagine).

The protein belongs to the histidine acid phosphatase family. Post-translationally, glycosylated during secretion across the membrane.

The protein localises to the secreted. It carries out the reaction a phosphate monoester + H2O = an alcohol + phosphate. This is Repressible acid phosphatase (PHO5) from Kluyveromyces lactis (strain ATCC 8585 / CBS 2359 / DSM 70799 / NBRC 1267 / NRRL Y-1140 / WM37) (Yeast).